We begin with the raw amino-acid sequence, 277 residues long: NADPH-dependent 7-cyano-7-deazaguanine reductase (277 aa).

83–85 (IES) lines the substrate pocket. 85–86 (SK) is an NADPH binding site. Catalysis depends on C184, which acts as the Thioimide intermediate. Catalysis depends on D191, which acts as the Proton donor. 223–224 (HE) is a binding site for substrate. Residue 252–253 (RG) coordinates NADPH.

It belongs to the GTP cyclohydrolase I family. QueF type 2 subfamily. In terms of assembly, homodimer.

Its subcellular location is the cytoplasm. The catalysed reaction is 7-aminomethyl-7-carbaguanine + 2 NADP(+) = 7-cyano-7-deazaguanine + 2 NADPH + 3 H(+). Its pathway is tRNA modification; tRNA-queuosine biosynthesis. Catalyzes the NADPH-dependent reduction of 7-cyano-7-deazaguanine (preQ0) to 7-aminomethyl-7-deazaguanine (preQ1). This Cupriavidus pinatubonensis (strain JMP 134 / LMG 1197) (Cupriavidus necator (strain JMP 134)) protein is NADPH-dependent 7-cyano-7-deazaguanine reductase.